The primary structure comprises 586 residues: UvrABC system protein C (586 aa).

In terms of domain architecture, GIY-YIG spans 17–94 (HKPGCYLWKD…IKQYKPRFNL (78 aa)). Residues 201-236 (EQVLNHLQQQEIKASEQQNFEAARHFLDLQKAVLEL) enclose the UVR domain.

The protein belongs to the UvrC family. In terms of assembly, interacts with UvrB in an incision complex.

The protein resides in the cytoplasm. In terms of biological role, the UvrABC repair system catalyzes the recognition and processing of DNA lesions. UvrC both incises the 5' and 3' sides of the lesion. The N-terminal half is responsible for the 3' incision and the C-terminal half is responsible for the 5' incision. This is UvrABC system protein C from Mycoplasma pneumoniae (strain ATCC 29342 / M129 / Subtype 1) (Mycoplasmoides pneumoniae).